A 299-amino-acid chain; its full sequence is Light-independent protochlorophyllide reductase iron-sulfur ATP-binding protein (299 aa).

A disordered region spans residues 1–23 (MSPLDRTPPSLRGQDGEGSVQVH). Residues 43–48 (GIGKST) and Lys72 each bind ATP. Ser47 contributes to the Mg(2+) binding site. Residues Cys128 and Cys162 each coordinate [4Fe-4S] cluster. ATP contacts are provided by residues 213–214 (NR) and 237–239 (PDL).

Belongs to the NifH/BchL/ChlL family. Homodimer. Protochlorophyllide reductase is composed of three subunits; BchL, BchN and BchB. [4Fe-4S] cluster is required as a cofactor.

The enzyme catalyses chlorophyllide a + oxidized 2[4Fe-4S]-[ferredoxin] + 2 ADP + 2 phosphate = protochlorophyllide a + reduced 2[4Fe-4S]-[ferredoxin] + 2 ATP + 2 H2O. Its pathway is porphyrin-containing compound metabolism; bacteriochlorophyll biosynthesis (light-independent). In terms of biological role, component of the dark-operative protochlorophyllide reductase (DPOR) that uses Mg-ATP and reduced ferredoxin to reduce ring D of protochlorophyllide (Pchlide) to form chlorophyllide a (Chlide). This reaction is light-independent. The L component serves as a unique electron donor to the NB-component of the complex, and binds Mg-ATP. The sequence is that of Light-independent protochlorophyllide reductase iron-sulfur ATP-binding protein from Roseobacter denitrificans (strain ATCC 33942 / OCh 114) (Erythrobacter sp. (strain OCh 114)).